A 692-amino-acid chain; its full sequence is uncharacterized protein (692 aa).

Response regulatory domains lie at 9-130 and 139-255; these read RVLY…LRMC and RILI…EYRM. Residues aspartate 58 and aspartate 188 each carry the 4-aspartylphosphate modification. Residues 299–432 form the GGDEF domain; the sequence is GVHGLVIIDV…GGNQAHVWSA (134 aa). The EAL domain occupies 443–691; that stretch reads ESVIKRLVST…SFDFQHMSHD (249 aa).

This is an uncharacterized protein from Thiocystis violacea.